The primary structure comprises 146 residues: Small ribosomal subunit protein bS6 (146 aa).

Positions 106–146 (QAAATQRAAERRAQREAERNAAQAQSSASNQARTAATTSGK) are disordered. Basic and acidic residues predominate over residues 113-124 (AAERRAQREAER). Low complexity predominate over residues 125-146 (NAAQAQSSASNQARTAATTSGK).

Belongs to the bacterial ribosomal protein bS6 family.

In terms of biological role, binds together with bS18 to 16S ribosomal RNA. This is Small ribosomal subunit protein bS6 from Oenococcus oeni (strain ATCC BAA-331 / PSU-1).